Consider the following 264-residue polypeptide: Tryptophan synthase alpha chain (264 aa).

Catalysis depends on proton acceptor residues glutamate 45 and aspartate 56.

This sequence belongs to the TrpA family. As to quaternary structure, tetramer of two alpha and two beta chains.

The catalysed reaction is (1S,2R)-1-C-(indol-3-yl)glycerol 3-phosphate + L-serine = D-glyceraldehyde 3-phosphate + L-tryptophan + H2O. Its pathway is amino-acid biosynthesis; L-tryptophan biosynthesis; L-tryptophan from chorismate: step 5/5. Functionally, the alpha subunit is responsible for the aldol cleavage of indoleglycerol phosphate to indole and glyceraldehyde 3-phosphate. The chain is Tryptophan synthase alpha chain from Leptospira borgpetersenii serovar Hardjo-bovis (strain JB197).